A 394-amino-acid chain; its full sequence is Guanine nucleotide-binding protein G(s) subunit alpha isoforms short (394 aa).

Residues 1-23 are disordered; the sequence is MGCLGNSKTEDQRNEEKAQREAN. The N-palmitoyl glycine moiety is linked to residue Gly-2. Cys-3 carries the S-palmitoyl cysteine lipid modification. A compositionally biased stretch (basic and acidic residues) spans 8–23; that stretch reads KTEDQRNEEKAQREAN. A G-alpha domain is found at 39–394; sequence ATHRLLLLGA…RMHLRQYELL (356 aa). A G1 motif region spans residues 42–55; the sequence is RLLLLGAGESGKST. Residue 47-55 coordinates GTP; that stretch reads GAGESGKST. Ser-54 serves as a coordination point for Mg(2+). The tract at residues 68–90 is disordered; it reads FNGEGGEEDPQAARSNSDGEKAT. Positions 196–204 are G2 motif; it reads DLLRCRVLT. GTP is bound by residues 197 to 204, 223 to 227, and 292 to 295; these read LLRCRVLT, DVGGQ, and NKQD. Residue Thr-204 coordinates Mg(2+). Residues 219–228 are G3 motif; the sequence is FHMFDVGGQR. Residues 288 to 295 are G4 motif; sequence ILFLNKQD. Lys-300 participates in a covalent cross-link: Glycyl lysine isopeptide (Lys-Gly) (interchain with G-Cter in ubiquitin). A Phosphoserine modification is found at Ser-352. Residues 364-369 form a G5 motif region; the sequence is TCAVDT. Ala-366 contributes to the GTP binding site.

Belongs to the G-alpha family. G(s) subfamily. In terms of assembly, heterotrimeric G proteins are composed of 3 units; alpha, beta and gamma. The alpha chain contains the guanine nucleotide binding site. Component of the TAS2R14-GNAS2 complex, consisting of TAS2R14, GNAS2, GNB1 and GNG2; within the complex interacts with TAS2R14; this complex plays a role in the perception of bitterness. Interacts with CRY1; the interaction may block GPCR-mediated regulation of cAMP concentrations. Interacts with ADCY6 and stimulates its adenylyl cyclase activity. Interacts with ADCY2 and ADCY5. Interacts (GDP-bound form) with RIC8B; promoting GNAS folding and association with the plasma membrane. Stimulates the ADCY5 adenylyl cyclase activity. Interaction with SASH1. Interacts with GASL2L2.

It is found in the cell membrane. It carries out the reaction GTP + H2O = GDP + phosphate + H(+). Functionally, guanine nucleotide-binding proteins (G proteins) function as transducers in numerous signaling pathways controlled by G protein-coupled receptors (GPCRs). The alpha chain contains the guanine nucleotide binding site and alternates between an active, GTP-bound state and an inactive, GDP-bound state. Signaling by an activated GPCR promotes GDP release and GTP binding. The alpha subunit has a low GTPase activity that converts bound GTP to GDP, thereby terminating the signal. Both GDP release and GTP hydrolysis are modulated by numerous regulatory proteins. Signaling involves the activation of adenylyl cyclases, resulting in increased levels of the signaling molecule cAMP. Functions downstream of beta-adrenergic receptors. Stimulates the Ras signaling pathway via RAPGEF2. In Mus musculus (Mouse), this protein is Guanine nucleotide-binding protein G(s) subunit alpha isoforms short (Gnas).